The sequence spans 625 residues: Probable potassium transport system protein Kup (625 aa).

12 helical membrane-spanning segments follow: residues 13–33, 53–73, 103–123, 141–161, 172–192, 206–226, 250–270, 282–302, 340–360, 369–389, 400–420, and 422–442; these read TALAALGVVFGDIGTSPLYAL, ILSIIFWCLMLIISIKYVAIV, IYMIAIGFIGASLFFGDGIIT, VFDPFIMPIAIAIIVTLFLVQ, FGPITLVWFLSLGILGIHSVI, AIQFIYHHPIMTFFVMGAVVL, WFFVVLPCLVLNYAGQGALLL, LLVPQWALYPMIIMATMATVI, IYVPFLNWLLLIAIIILILIF, AYGLAVTLTMLCDTILVAVFI, VLLLIIPFFILESVLVGATSL, and ILSGGWVPLLIGAIAVTILMT.

The protein belongs to the HAK/KUP transporter (TC 2.A.72) family.

It localises to the cell inner membrane. The enzyme catalyses K(+)(in) + H(+)(in) = K(+)(out) + H(+)(out). Its function is as follows. Transport of potassium into the cell. Likely operates as a K(+):H(+) symporter. The chain is Probable potassium transport system protein Kup from Acinetobacter baumannii (strain ACICU).